Reading from the N-terminus, the 394-residue chain is Ceramide glucosyltransferase-B (394 aa).

The Lumenal portion of the chain corresponds to methionine 1 to glycine 10. A helical transmembrane segment spans residues leucine 11–tyrosine 32. Residues threonine 33 to arginine 195 lie on the Cytoplasmic side of the membrane. Aspartate 92 is a short sequence motif (D1). Residue aspartate 144 is a short sequence motif, D2. The helical transmembrane segment at serine 196–methionine 215 threads the bilayer. Over arginine 216 to threonine 287 the chain is Lumenal. Aspartate 236 is a short sequence motif (D3). Aspartate 236 serves as the catalytic Proton acceptor. The (Q/R)XXRW signature appears at arginine 272–tryptophan 276. Residues isoleucine 288–glycine 304 form a helical membrane-spanning segment. The Cytoplasmic segment spans residues tryptophan 305 to histidine 309. A helical transmembrane segment spans residues isoleucine 310 to isoleucine 328. At phenylalanine 329 to aspartate 348 the chain is on the lumenal side. A helical transmembrane segment spans residues tyrosine 349–tryptophan 369. The Cytoplasmic segment spans residues aspartate 370–valine 394.

Belongs to the glycosyltransferase 2 family.

It localises to the golgi apparatus membrane. It catalyses the reaction an N-acylsphing-4-enine + UDP-alpha-D-glucose = a beta-D-glucosyl-(1&lt;-&gt;1')-N-acylsphing-4-enine + UDP + H(+). The catalysed reaction is UDP-alpha-D-xylose + an N-acylsphing-4-enine = a beta-D-xylosyl-(1&lt;-&gt;1')-N-acylsphing-4-enine + UDP + H(+). The enzyme catalyses N-(9Z-octadecenoyl)-sphing-4-enine + UDP-alpha-D-xylose = beta-D-xylosyl-(1&lt;-&gt;1')-N-(9Z-octadecenoyl)-sphing-4-enine + UDP + H(+). The protein operates within lipid metabolism; sphingolipid metabolism. In terms of biological role, participates in the initial step of the glucosylceramide-based glycosphingolipid/GSL synthetic pathway at the cytosolic surface of the Golgi. Catalyzes the transfer of glucose from UDP-glucose to ceramide to produce glucosylceramide/GlcCer (such as beta-D-glucosyl-(1&lt;-&gt;1')-N-acylsphing-4-enine). Glucosylceramide is the core component of glycosphingolipids/GSLs, amphipathic molecules consisting of a ceramide lipid moiety embedded in the outer leaflet of the membrane, linked to one of hundreds of different externally oriented oligosaccharide structures. Glycosphingolipids are essential components of membrane microdomains that mediate membrane trafficking and signal transduction. They are implicated in many fundamental cellular processes, including growth, differentiation, migration, morphogenesis, cell-to-cell and cell-to-matrix interactions. Catalyzes the synthesis of xylosylceramide/XylCer (such as beta-D-xylosyl-(1&lt;-&gt;1')-N-acylsphing-4-enine) using UDP-Xyl as xylose donor. This Xenopus laevis (African clawed frog) protein is Ceramide glucosyltransferase-B (ugcg-b).